The chain runs to 610 residues: tRNA uridine 5-carboxymethylaminomethyl modification enzyme MnmG (610 aa).

14–19 (GAGHAG) serves as a coordination point for FAD. NAD(+) is bound at residue 274-288 (GPRYCPSIEDKIVKF).

Belongs to the MnmG family. As to quaternary structure, homodimer. Heterotetramer of two MnmE and two MnmG subunits. The cofactor is FAD.

Its subcellular location is the cytoplasm. Its function is as follows. NAD-binding protein involved in the addition of a carboxymethylaminomethyl (cmnm) group at the wobble position (U34) of certain tRNAs, forming tRNA-cmnm(5)s(2)U34. The protein is tRNA uridine 5-carboxymethylaminomethyl modification enzyme MnmG of Chlamydia muridarum (strain MoPn / Nigg).